Consider the following 314-residue polypeptide: Taste receptor type 2 member 42 (314 aa).

Residues 1–7 (MATELDK) are Extracellular-facing. A helical membrane pass occupies residues 8 to 28 (IFLILEIAEFIIGMLGNVFIG). Topologically, residues 29–50 (LVNCSEGIKNQKVFSADFILTC) are cytoplasmic. Residues 51-71 (LAISTIGQLFVILFDSFLVGL) form a helical membrane-spanning segment. At 72 to 101 (ASHLYTTYRLGKPVIMLWHMTNHLTTWLAT) the chain is on the extracellular side. The helical transmembrane segment at 102–122 (CLSIFYFFKIAHFPHSLFLWL) threads the bilayer. The Cytoplasmic segment spans residues 123 to 127 (RWRMN). Residues 128 to 148 (GMIVMLLILSLFLLIFDSLVL) form a helical membrane-spanning segment. The Extracellular segment spans residues 149–187 (EIFIDISLNIIDKSNLTLYLDESKTLYDKLSILKTLLSL). N-linked (GlcNAc...) asparagine glycosylation is present at N163. The chain crosses the membrane as a helical span at residues 188–208 (TSFIPFSLSLTSLLFFFLSLV). Residues 209–238 (RHTRNLKLSSLGSRDSSTEAHRRAMKMVMS) are Cytoplasmic-facing. The chain crosses the membrane as a helical span at residues 239–259 (FLFLFIVHFFSLQVANWIFFM). Over 260 to 265 (LWNNKY) the chain is Extracellular. Residues 266–286 (IKFAMLALNAFPSCHSFILIL) traverse the membrane as a helical segment. Residues 287–314 (GNSKLRQTAVRLLWHLRNYTKTPNALPL) are Cytoplasmic-facing.

Belongs to the G-protein coupled receptor T2R family.

Its subcellular location is the membrane. Receptor that may play a role in the perception of bitterness and is gustducin-linked. May play a role in sensing the chemical composition of the gastrointestinal content. The activity of this receptor may stimulate alpha gustducin, mediate PLC-beta-2 activation and lead to the gating of TRPM5. The polypeptide is Taste receptor type 2 member 42 (TAS2R42) (Pan paniscus (Pygmy chimpanzee)).